The sequence spans 286 residues: Transcription factor bHLH137 (286 aa).

Polar residues predominate over residues 63–84; it reads SGSEKLANTTKTATTGSSSCDQ. Positions 63–149 are disordered; sequence SGSEKLANTT…RGQATDSHSL (87 aa). Positions 142-192 constitute a bHLH domain; sequence QATDSHSLAERVRREKISERMRTLQNLVPGCDKVTGKALMLDEIINYVQTL.

As to quaternary structure, homodimer.

Its subcellular location is the nucleus. This Arabidopsis thaliana (Mouse-ear cress) protein is Transcription factor bHLH137 (BHLH137).